A 70-amino-acid chain; its full sequence is Large ribosomal subunit protein eL24 (70 aa).

4 residues coordinate Zn(2+): Cys7, Cys10, Cys33, and Cys37. The C4-type zinc finger occupies 7-37 (CSFCGYEIEPGKGKMVVEKDGTVLYFCSSKC).

Belongs to the eukaryotic ribosomal protein eL24 family. In terms of assembly, part of the 50S ribosomal subunit. Forms a cluster with proteins L3 and L14. The cofactor is Zn(2+).

Binds to the 23S rRNA. The chain is Large ribosomal subunit protein eL24 from Methanocaldococcus jannaschii (strain ATCC 43067 / DSM 2661 / JAL-1 / JCM 10045 / NBRC 100440) (Methanococcus jannaschii).